The sequence spans 389 residues: Lipid-A-disaccharide synthase (389 aa).

It belongs to the LpxB family.

It catalyses the reaction a lipid X + a UDP-2-N,3-O-bis[(3R)-3-hydroxyacyl]-alpha-D-glucosamine = a lipid A disaccharide + UDP + H(+). The protein operates within bacterial outer membrane biogenesis; LPS lipid A biosynthesis. In terms of biological role, condensation of UDP-2,3-diacylglucosamine and 2,3-diacylglucosamine-1-phosphate to form lipid A disaccharide, a precursor of lipid A, a phosphorylated glycolipid that anchors the lipopolysaccharide to the outer membrane of the cell. This chain is Lipid-A-disaccharide synthase, found in Burkholderia lata (strain ATCC 17760 / DSM 23089 / LMG 22485 / NCIMB 9086 / R18194 / 383).